Consider the following 246-residue polypeptide: Probable transcriptional regulatory protein APP7_1210 (246 aa).

It belongs to the TACO1 family.

Its subcellular location is the cytoplasm. This Actinobacillus pleuropneumoniae serotype 7 (strain AP76) protein is Probable transcriptional regulatory protein APP7_1210.